Consider the following 157-residue polypeptide: Endoribonuclease YbeY (157 aa).

3 residues coordinate Zn(2+): histidine 116, histidine 120, and histidine 126.

The protein belongs to the endoribonuclease YbeY family. It depends on Zn(2+) as a cofactor.

The protein resides in the cytoplasm. In terms of biological role, single strand-specific metallo-endoribonuclease involved in late-stage 70S ribosome quality control and in maturation of the 3' terminus of the 16S rRNA. This chain is Endoribonuclease YbeY, found in Pseudarthrobacter chlorophenolicus (strain ATCC 700700 / DSM 12829 / CIP 107037 / JCM 12360 / KCTC 9906 / NCIMB 13794 / A6) (Arthrobacter chlorophenolicus).